The primary structure comprises 230 residues: Leucyl/phenylalanyl-tRNA--protein transferase (230 aa).

This sequence belongs to the L/F-transferase family.

It localises to the cytoplasm. The catalysed reaction is N-terminal L-lysyl-[protein] + L-leucyl-tRNA(Leu) = N-terminal L-leucyl-L-lysyl-[protein] + tRNA(Leu) + H(+). It catalyses the reaction N-terminal L-arginyl-[protein] + L-leucyl-tRNA(Leu) = N-terminal L-leucyl-L-arginyl-[protein] + tRNA(Leu) + H(+). It carries out the reaction L-phenylalanyl-tRNA(Phe) + an N-terminal L-alpha-aminoacyl-[protein] = an N-terminal L-phenylalanyl-L-alpha-aminoacyl-[protein] + tRNA(Phe). Its function is as follows. Functions in the N-end rule pathway of protein degradation where it conjugates Leu, Phe and, less efficiently, Met from aminoacyl-tRNAs to the N-termini of proteins containing an N-terminal arginine or lysine. The protein is Leucyl/phenylalanyl-tRNA--protein transferase of Hamiltonella defensa subsp. Acyrthosiphon pisum (strain 5AT).